The chain runs to 186 residues: MAQTDDRLPQMHATTILMVRKGGRVVIGGDGQVSLGQTIVKGNARKVRRLAKGAVIGGFAGATADAFTLFERLEAKLEQYPGQLSRACVELTKDWRTDRYLRRLEAMMLVADKEVGLLLSGAGDVLEPETGVMAIGSGGNYALSAARALEDGELDAEAIVRRSMKIAAEICVYTNGNLVIETLDAA.

Residue T14 is part of the active site. Positions 168, 171, and 174 each coordinate Na(+).

This sequence belongs to the peptidase T1B family. HslV subfamily. As to quaternary structure, a double ring-shaped homohexamer of HslV is capped on each side by a ring-shaped HslU homohexamer. The assembly of the HslU/HslV complex is dependent on binding of ATP.

Its subcellular location is the cytoplasm. The catalysed reaction is ATP-dependent cleavage of peptide bonds with broad specificity.. With respect to regulation, allosterically activated by HslU binding. Protease subunit of a proteasome-like degradation complex believed to be a general protein degrading machinery. The polypeptide is ATP-dependent protease subunit HslV (Methylorubrum extorquens (strain CM4 / NCIMB 13688) (Methylobacterium extorquens)).